Consider the following 389-residue polypeptide: Acyl-[acyl-carrier-protein] dehydrogenase MbtN (389 aa).

It belongs to the acyl-CoA dehydrogenase family. The cofactor is FAD.

Its pathway is siderophore biosynthesis; mycobactin biosynthesis. Catalyzes the dehydrogenation at the alpha-beta position of ACP-bound acyl chains. This results in the introduction of a double bond in the lipidic chain, which is further transferred to the epsilon-amino group of lysine residue in the mycobactin core by MbtK. The sequence is that of Acyl-[acyl-carrier-protein] dehydrogenase MbtN (mbtN) from Mycobacterium sp. (strain MCS).